Here is a 76-residue protein sequence, read N- to C-terminus: ATP synthase subunit 9, mitochondrial (76 aa).

The next 2 helical transmembrane spans lie at 14-34 (ISTI…AALI) and 48-68 (FPFA…CLMV).

It belongs to the ATPase C chain family. In terms of assembly, F-type ATPases have 2 components, CF(1) - the catalytic core - and CF(0) - the membrane proton channel. CF(1) has five subunits: alpha(3), beta(3), gamma(1), delta(1), epsilon(1). CF(0) has three main subunits: a, b and c.

The protein localises to the mitochondrion membrane. Functionally, mitochondrial membrane ATP synthase (F(1)F(0) ATP synthase or Complex V) produces ATP from ADP in the presence of a proton gradient across the membrane which is generated by electron transport complexes of the respiratory chain. F-type ATPases consist of two structural domains, F(1) - containing the extramembraneous catalytic core and F(0) - containing the membrane proton channel, linked together by a central stalk and a peripheral stalk. During catalysis, ATP synthesis in the catalytic domain of F(1) is coupled via a rotary mechanism of the central stalk subunits to proton translocation. Part of the complex F(0) domain. A homomeric c-ring of probably 10 subunits is part of the complex rotary element. The protein is ATP synthase subunit 9, mitochondrial (ATP9) of Cyberlindnera mrakii (Yeast).